The following is a 213-amino-acid chain: 3-demethoxyubiquinol 3-hydroxylase (213 aa).

Glu-62, Glu-92, His-95, Glu-144, Glu-176, and His-179 together coordinate Fe cation.

Belongs to the COQ7 family. Requires Fe cation as cofactor.

The protein localises to the cell membrane. The enzyme catalyses a 5-methoxy-2-methyl-3-(all-trans-polyprenyl)benzene-1,4-diol + AH2 + O2 = a 3-demethylubiquinol + A + H2O. It participates in cofactor biosynthesis; ubiquinone biosynthesis. Functionally, catalyzes the hydroxylation of 2-nonaprenyl-3-methyl-6-methoxy-1,4-benzoquinol during ubiquinone biosynthesis. In Psychrobacter sp. (strain PRwf-1), this protein is 3-demethoxyubiquinol 3-hydroxylase.